The following is a 91-amino-acid chain: uncharacterized protein (91 aa).

2 helical membrane-spanning segments follow: residues 22 to 42 (WPVI…AFVV) and 53 to 73 (VAGL…LAAA).

It localises to the cell membrane. This is an uncharacterized protein from Mycobacterium bovis (strain ATCC BAA-935 / AF2122/97).